The primary structure comprises 464 residues: 3-isopropylmalate dehydratase large subunit (464 aa).

Residues Cys337, Cys397, and Cys400 each coordinate [4Fe-4S] cluster.

The protein belongs to the aconitase/IPM isomerase family. LeuC type 1 subfamily. Heterodimer of LeuC and LeuD. The cofactor is [4Fe-4S] cluster.

It carries out the reaction (2R,3S)-3-isopropylmalate = (2S)-2-isopropylmalate. It functions in the pathway amino-acid biosynthesis; L-leucine biosynthesis; L-leucine from 3-methyl-2-oxobutanoate: step 2/4. Functionally, catalyzes the isomerization between 2-isopropylmalate and 3-isopropylmalate, via the formation of 2-isopropylmaleate. In Bacillus cereus (strain ZK / E33L), this protein is 3-isopropylmalate dehydratase large subunit.